We begin with the raw amino-acid sequence, 498 residues long: Tyrosine 3-monooxygenase (498 aa).

The segment covering 1 to 10 (MPTPSAPSPQ) has biased composition (pro residues). Residues 1-31 (MPTPSAPSPQPKGFRRAVSEQDAKQAEAVTS) form a disordered region. Ser19 carries the post-translational modification Phosphoserine; by CaMK2. Residue Ser31 is modified to Phosphoserine. Ser40 carries the post-translational modification Phosphoserine; by CaMK2 and PKA. The Fe cation site is built by His331, His336, and Glu376. Phosphoserine is present on Ser472.

The protein belongs to the biopterin-dependent aromatic amino acid hydroxylase family. In terms of assembly, homotetramer. Interacts (when phosphorylated at Ser-19) with YWHAG; one YWHAG dimer binds to one TH tetramer and this interaction may influence the phosphorylation and dephosphorylation of other sites. Interacts with NT5DC2; the interaction results in reduced phosphorylation and decreased catalytic activity of TH. Fe(2+) serves as cofactor. Phosphorylated on Ser-19, Ser-31 and Ser-40 by several protein kinases with different site specificities. Phosphorylation at Ser-31 and Ser-40 leads to an increase of TH activity. Phosphorylation at Ser-40 activates the enzyme and also counteracts the feedback inhibition of TH by catecholamines. Phosphorylation of Ser-19 and Ser-31 triggers the proteasomal degradation of TH through the ubiquitin-proteasome pathway. Phosphorylation at Ser-31 facilitates transport of TH from the soma to the nerve terminals via the microtubule network. Phosphorylation at Ser-19 induces the high-affinity binding to the 14-3-3 protein YWHAG; this interaction may influence the phosphorylation and dephosphorylation of other sites. Ser-19 increases the phosphorylation at Ser-40 in a hierarchical manner, leading to increased activity.

It localises to the cytoplasm. It is found in the perinuclear region. The protein resides in the nucleus. The protein localises to the cell projection. Its subcellular location is the axon. It localises to the cytoplasmic vesicle. It is found in the secretory vesicle. The protein resides in the synaptic vesicle. It carries out the reaction (6R)-L-erythro-5,6,7,8-tetrahydrobiopterin + L-tyrosine + O2 = (4aS,6R)-4a-hydroxy-L-erythro-5,6,7,8-tetrahydrobiopterin + L-dopa. The protein operates within catecholamine biosynthesis; dopamine biosynthesis; dopamine from L-tyrosine: step 1/2. With respect to regulation, inhibited in feedback fashion by the catecholamine neurotransmitters, especially by dopamine in competition with tetrahydrobiopterin. Phosphorylation of several Ser/Thr residues in the N-terminus regulates the catalytic activity. Ser-31 and Ser-40 are readily phosphorylated to activate the catalytic activity. A cysteine modification induced by N-ethylmaleimide (NEM), inhibits tyrosine 3-monooxygenase activity through the modification of the Cys-177. Functionally, catalyzes the conversion of L-tyrosine to L-dihydroxyphenylalanine (L-Dopa), the rate-limiting step in the biosynthesis of catecholamines, dopamine, noradrenaline, and adrenaline. Uses tetrahydrobiopterin and molecular oxygen to convert tyrosine to L-Dopa. In addition to tyrosine, is able to catalyze the hydroxylation of phenylalanine and tryptophan but with lower specificity. Positively regulates the regression of retinal hyaloid vessels during postnatal development. This is Tyrosine 3-monooxygenase (Th) from Rattus norvegicus (Rat).